Here is an 89-residue protein sequence, read N- to C-terminus: UPF0367 protein P9515_01381 (89 aa).

This sequence belongs to the UPF0367 family.

The protein is UPF0367 protein P9515_01381 of Prochlorococcus marinus (strain MIT 9515).